The sequence spans 199 residues: Ion-translocating oxidoreductase complex subunit A (199 aa).

6 helical membrane passes run 8-28, 49-69, 75-95, 106-126, 138-158, and 178-198; these read LFTI…QFLG, VVFV…FILV, FLRT…VEFI, SLGI…AVLL, VVFG…MAAI, and AFFI…VIPL.

The protein belongs to the NqrDE/RnfAE family. As to quaternary structure, the Rnf complex is probably composed of eight subunits, including RnfA, RnfB, RnfC, RnfD, RnfE and RnfG.

It is found in the cell membrane. Functionally, part of a membrane-bound complex that couples electron transfer with translocation of ions across the membrane. Catalyzes Na(+) transport, most probably coupled to electron transfer from reduced ferredoxin to methanophenazine and heterodisulfide reductase. Involved in heterodisulfide reduction during methanogenesis from acetate. The chain is Ion-translocating oxidoreductase complex subunit A from Methanosarcina acetivorans (strain ATCC 35395 / DSM 2834 / JCM 12185 / C2A).